Here is a 101-residue protein sequence, read N- to C-terminus: Long chronological lifespan protein 1 (101 aa).

Positions 1–17 (MKNAALCEALPLLATCS) are cleaved as a signal peptide. Residue S81 is the site of GPI-anchor amidated serine attachment. Residues 82 to 101 (FAKPSFSFFFFLLTSLLSPF) constitute a propeptide, removed in mature form.

Its subcellular location is the cell membrane. The chain is Long chronological lifespan protein 1 (LCL1) from Saccharomyces cerevisiae (strain ATCC 204508 / S288c) (Baker's yeast).